We begin with the raw amino-acid sequence, 431 residues long: MKLWKPTLISVLSALTLFNAHAEPKQLDSVAVIVNSGVILQSDVDSALKTIKANAKQNKQPLPQETVLREQVLEKLIIDTLQQQEADRIGVKIDDNRLNEAIKEIAKNNQQTQEQLIASVAQEGLTYPEFREQVRKEMAASDARNALVRRRINILPAEVDTLAELLAQETDATVQYKISHIQLRVDDGQDKSTAETLANKLVNDLRNGADFAQMAYAYSKGPKALQGGDWGWMRKEEMPTIFADQIKMQNKGSIIGPFRSGVGFHILKIDDVKGLETVAVTEVNARHILIKPTIILSDEGAQKQLNEFVQRIKNGEVTFAELAQQYSQDPGSAAQKGELGYQTPDLYVPEFKHQIETLPVGQISEPFKTVHGWHIVEVLDRREVDRTDSALKNKAYRILFNRKFNEEASAWLQELRASAFVEVLKDEKDEQ.

An N-terminal signal peptide occupies residues 1–22 (MKLWKPTLISVLSALTLFNAHA). PpiC domains follow at residues 173–271 (TVQY…KIDD) and 280–380 (VTEV…EVLD).

The protein resides in the periplasm. It catalyses the reaction [protein]-peptidylproline (omega=180) = [protein]-peptidylproline (omega=0). Its function is as follows. Chaperone involved in the correct folding and assembly of outer membrane proteins. Recognizes specific patterns of aromatic residues and the orientation of their side chains, which are found more frequently in integral outer membrane proteins. May act in both early periplasmic and late outer membrane-associated steps of protein maturation. The sequence is that of Chaperone SurA from Vibrio cholerae serotype O1 (strain ATCC 39315 / El Tor Inaba N16961).